The primary structure comprises 106 residues: Small ribosomal subunit protein uS10 (106 aa).

This sequence belongs to the universal ribosomal protein uS10 family. As to quaternary structure, part of the 30S ribosomal subunit.

Its function is as follows. Involved in the binding of tRNA to the ribosomes. The sequence is that of Small ribosomal subunit protein uS10 from Wolbachia pipientis subsp. Culex pipiens (strain wPip).